The chain runs to 56 residues: Large ribosomal subunit protein bL33 (56 aa).

The protein belongs to the bacterial ribosomal protein bL33 family.

This chain is Large ribosomal subunit protein bL33, found in Actinobacillus pleuropneumoniae serotype 5b (strain L20).